Here is a 142-residue protein sequence, read N- to C-terminus: Large ribosomal subunit protein uL11 (142 aa).

The protein belongs to the universal ribosomal protein uL11 family. In terms of assembly, part of the ribosomal stalk of the 50S ribosomal subunit. Interacts with L10 and the large rRNA to form the base of the stalk. L10 forms an elongated spine to which L12 dimers bind in a sequential fashion forming a multimeric L10(L12)X complex. One or more lysine residues are methylated.

Functionally, forms part of the ribosomal stalk which helps the ribosome interact with GTP-bound translation factors. This chain is Large ribosomal subunit protein uL11, found in Pectobacterium atrosepticum (strain SCRI 1043 / ATCC BAA-672) (Erwinia carotovora subsp. atroseptica).